Reading from the N-terminus, the 106-residue chain is NADH-quinone oxidoreductase subunit K (106 aa).

3 consecutive transmembrane segments (helical) span residues 8 to 28 (IGIENYIYLCVVLFCIGIFGV), 35 to 55 (IIMFMSIEIMLNAVNLLFVAF), and 66 to 86 (VFVFFSMAVAAAEVAVGLAIL).

This sequence belongs to the complex I subunit 4L family. In terms of assembly, NDH-1 is composed of 14 different subunits. Subunits NuoA, H, J, K, L, M, N constitute the membrane sector of the complex.

It is found in the cell inner membrane. The enzyme catalyses a quinone + NADH + 5 H(+)(in) = a quinol + NAD(+) + 4 H(+)(out). Functionally, NDH-1 shuttles electrons from NADH, via FMN and iron-sulfur (Fe-S) centers, to quinones in the respiratory chain. The immediate electron acceptor for the enzyme in this species is believed to be a menaquinone. Couples the redox reaction to proton translocation (for every two electrons transferred, four hydrogen ions are translocated across the cytoplasmic membrane), and thus conserves the redox energy in a proton gradient. The protein is NADH-quinone oxidoreductase subunit K of Flavobacterium psychrophilum (strain ATCC 49511 / DSM 21280 / CIP 103535 / JIP02/86).